We begin with the raw amino-acid sequence, 223 residues long: 2-C-methyl-D-erythritol 4-phosphate cytidylyltransferase (223 aa).

The protein belongs to the IspD/TarI cytidylyltransferase family. IspD subfamily.

It catalyses the reaction 2-C-methyl-D-erythritol 4-phosphate + CTP + H(+) = 4-CDP-2-C-methyl-D-erythritol + diphosphate. Its pathway is isoprenoid biosynthesis; isopentenyl diphosphate biosynthesis via DXP pathway; isopentenyl diphosphate from 1-deoxy-D-xylulose 5-phosphate: step 2/6. Its function is as follows. Catalyzes the formation of 4-diphosphocytidyl-2-C-methyl-D-erythritol from CTP and 2-C-methyl-D-erythritol 4-phosphate (MEP). This chain is 2-C-methyl-D-erythritol 4-phosphate cytidylyltransferase, found in Prochlorococcus marinus (strain MIT 9215).